We begin with the raw amino-acid sequence, 338 residues long: MTSHVTAHDVGGNEDIGTDHVPWYKQPLPLCTQVMRFILLLLLTVMFLGVAILVANARMPDPEKVRPLPDLLLESIPKVALLENGTNVIIFLLNATTVVVGFKVFLLERHMNGLPRVTFLVGVPKIGSFLNRMAFGVLDSGRRPFPLKNVFPIMAIRFLTSYAVVMVFRAFVIMGTSYPATDNHCQNPQVIEHPVLNVILTLVTLGSGAIHCGDLMFSGHTMILSLAFILAWDYSPFLHPWAVRVWVSVLLPISYYCILASRSHYTDDILVAMYVMIATYKVIDHAETGAPWQMQLLIRWMPWPGANTIEKWTADEVVVVVQTPAEDSTDASAALPEH.

Topologically, residues 1–36 (MTSHVTAHDVGGNEDIGTDHVPWYKQPLPLCTQVMR) are cytoplasmic. Residues 37–57 (FILLLLLTVMFLGVAILVANA) form a helical membrane-spanning segment. Topologically, residues 58–87 (RMPDPEKVRPLPDLLLESIPKVALLENGTN) are extracellular. A helical transmembrane segment spans residues 88-108 (VIIFLLNATTVVVGFKVFLLE). Residues 109 to 116 (RHMNGLPR) lie on the Cytoplasmic side of the membrane. Residues 117-137 (VTFLVGVPKIGSFLNRMAFGV) form a helical membrane-spanning segment. Topologically, residues 138 to 152 (LDSGRRPFPLKNVFP) are extracellular. The helical transmembrane segment at 153-173 (IMAIRFLTSYAVVMVFRAFVI) threads the bilayer. Topologically, residues 174–189 (MGTSYPATDNHCQNPQ) are cytoplasmic. The helical transmembrane segment at 190–210 (VIEHPVLNVILTLVTLGSGAI) threads the bilayer. Topologically, residues 211 to 222 (HCGDLMFSGHTM) are extracellular. The active site involves H220. The helical transmembrane segment at 223–243 (ILSLAFILAWDYSPFLHPWAV) threads the bilayer. At 244-338 (RVWVSVLLPI…TDASAALPEH (95 aa)) the chain is on the cytoplasmic side. Active-site residues include H264 and D268.

The protein belongs to the sphingomyelin synthase family.

It is found in the membrane. Bidirectional lipid inositolphosphotransferase capable of converting phosphatidylinositol (PI) and ceramide to inositol-phosphorylceramide (IPC) and diacylglycerol (DAG) and vice versa. Direction is dependent on the relative concentrations of DAG and ceramide as phosphoinositol acceptors. Essential for viability of the pathogenic bloodstream stage of this human protozoan parasite and, consequently, can be considered as potential drug target. The sequence is that of Phosphatidylinositol:ceramide inositolphosphotransferase from Leishmania major.